Reading from the N-terminus, the 341-residue chain is Tetraacyldisaccharide 4'-kinase (341 aa).

Position 65 to 72 (Thr-65 to Thr-72) interacts with ATP.

Belongs to the LpxK family.

The enzyme catalyses a lipid A disaccharide + ATP = a lipid IVA + ADP + H(+). It functions in the pathway glycolipid biosynthesis; lipid IV(A) biosynthesis; lipid IV(A) from (3R)-3-hydroxytetradecanoyl-[acyl-carrier-protein] and UDP-N-acetyl-alpha-D-glucosamine: step 6/6. Transfers the gamma-phosphate of ATP to the 4'-position of a tetraacyldisaccharide 1-phosphate intermediate (termed DS-1-P) to form tetraacyldisaccharide 1,4'-bis-phosphate (lipid IVA). This Shewanella woodyi (strain ATCC 51908 / MS32) protein is Tetraacyldisaccharide 4'-kinase.